A 641-amino-acid polypeptide reads, in one-letter code: Threonine--tRNA ligase (641 aa).

One can recognise a TGS domain in the interval 1–61 (MPVITLPDGS…ENDTELAIVT (61 aa)). The interval 242–533 (DHRKIGKKLG…LIEEYEGAFP (292 aa)) is catalytic. Residues cysteine 333, histidine 384, and histidine 510 each contribute to the Zn(2+) site.

It belongs to the class-II aminoacyl-tRNA synthetase family. In terms of assembly, homodimer. Zn(2+) serves as cofactor.

It is found in the cytoplasm. The enzyme catalyses tRNA(Thr) + L-threonine + ATP = L-threonyl-tRNA(Thr) + AMP + diphosphate + H(+). Its function is as follows. Catalyzes the attachment of threonine to tRNA(Thr) in a two-step reaction: L-threonine is first activated by ATP to form Thr-AMP and then transferred to the acceptor end of tRNA(Thr). Also edits incorrectly charged L-seryl-tRNA(Thr). The sequence is that of Threonine--tRNA ligase from Marinobacter nauticus (strain ATCC 700491 / DSM 11845 / VT8) (Marinobacter aquaeolei).